Reading from the N-terminus, the 101-residue chain is CLAVATA3/ESR (CLE)-related protein 18 (101 aa).

An N-terminal signal peptide occupies residues 1-25; it reads MHLLKGGVVLIITLILFLITSSIVA. The disordered stretch occupies residues 37-58; sequence RQIPTGPDPLHNPPQPSPKHHH. 2 positions are modified to hydroxyproline: P40 and P43. The span at 42–53 shows a compositional bias: pro residues; it reads GPDPLHNPPQPS. O-linked (Ara...) hydroxyproline glycosylation occurs at P43. At Y76 the chain carries Sulfotyrosine. Hydroxyproline is present on P84.

The protein belongs to the CLV3/ESR signal peptide family. In terms of processing, the tyrosine sulfation is critical for the function of the peptide. Post-translationally, the O-glycosylation (arabinosylation) of the hydroxyproline Pro-43 enhances binding affinity of the CLE18p peptide for its receptor. As to expression, expressed in roots, leaves, siliques and seedlings.

The protein localises to the secreted. It is found in the extracellular space. Functionally, root growth factor that regulates the pattern of root growth and lateral root development by modulating the length and the number of cortical cells in the root apical meristem (RAM), and the anticlinal asymmetric cell divisions in lateral root initiation cells. Extracellular signal peptide that regulates cell fate. Represses root apical meristem maintenance. Root growth factor that regulates the pattern of root growth and lateral root development. Regulates the transition of protophloem cells from proliferation to differentiation, thus impinging on postembryonic growth capacity of the root meristem; this signaling pathway requires CRN and CLV2. In Arabidopsis thaliana (Mouse-ear cress), this protein is CLAVATA3/ESR (CLE)-related protein 18.